The chain runs to 348 residues: Rhodopsin (348 aa).

At 1-33 (TEGPYFYIPMVNTTGIVRSPYEYPQYYLVNPAA) the chain is on the extracellular side. The N-linked (GlcNAc...) asparagine glycan is linked to N12. Residues 34–58 (YAMLGAYMFFLIIVGFPVNFMTLYV) form a helical membrane-spanning segment. The Cytoplasmic portion of the chain corresponds to 59–70 (TLEHKKLRTPLN). Residues 71–93 (YILLNLAVADLFMVIGGFTTTIY) traverse the membrane as a helical segment. Topologically, residues 94–107 (TSMHGYFVLGRLGC) are extracellular. A disulfide bond links C107 and C184. A helical transmembrane segment spans residues 108–130 (NIEGFFATLGGMISLWSLAVLAI). Positions 131-133 (ERW) match the 'Ionic lock' involved in activated form stabilization motif. The Cytoplasmic portion of the chain corresponds to 131 to 149 (ERWVVVCKPISNFRFGENH). Residues 150-170 (AIMGVSLTWAMALACTVPPLV) form a helical membrane-spanning segment. Topologically, residues 171 to 199 (GWSRYIPEGMQCSCGIDYYTRAEGFNNES) are extracellular. Residue N197 is glycosylated (N-linked (GlcNAc...) asparagine). The helical transmembrane segment at 200 to 221 (FVLYMFFCHFTIPLTIIFFCYG) threads the bilayer. Over 222-249 (RLLCAVKEAAAAQQESETTQRAEREVTR) the chain is Cytoplasmic. A helical membrane pass occupies residues 250-271 (MVIIMVIGFLICWLPYASVAWF). Over 272-283 (IFTHQGSEFGPL) the chain is Extracellular. Residues 284 to 305 (FMTIPAFFAKSSSIYNPMIYIC) form a helical membrane-spanning segment. Residue K293 is modified to N6-(retinylidene)lysine. Residues 306–348 (MNKQFRHCMITTLFCGKNPFEGEEEGASSTKTEASSASSVSPA) are Cytoplasmic-facing. Residue C320 is the site of S-palmitoyl cysteine attachment. The interval 327–348 (GEEEGASSTKTEASSASSVSPA) is disordered. Positions 332 to 348 (ASSTKTEASSASSVSPA) are enriched in low complexity.

It belongs to the G-protein coupled receptor 1 family. Opsin subfamily. In terms of processing, phosphorylated on some or all of the serine and threonine residues present in the C-terminal region. Contains one covalently linked retinal chromophore.

It localises to the membrane. Its subcellular location is the cell projection. The protein localises to the cilium. It is found in the photoreceptor outer segment. Its function is as follows. Photoreceptor required for image-forming vision at low light intensity. While most salt water fish species use retinal as chromophore, most freshwater fish use 3-dehydroretinal, or a mixture of retinal and 3-dehydroretinal. Light-induced isomerization of 11-cis to all-trans retinal triggers a conformational change that activates signaling via G-proteins. Subsequent receptor phosphorylation mediates displacement of the bound G-protein alpha subunit by arrestin and terminates signaling. This Sargocentron microstoma (Smallmouth squirrelfish) protein is Rhodopsin (rho).